The chain runs to 302 residues: Ornithine carbamoyltransferase (302 aa).

Residues 53–56 (STRT), Gln80, Arg104, and 131–134 (HPCQ) each bind carbamoyl phosphate. L-ornithine-binding positions include Asn162, Asp219, and 223–224 (SM). Carbamoyl phosphate contacts are provided by residues 259 to 260 (CL) and Arg287.

Belongs to the aspartate/ornithine carbamoyltransferase superfamily. OTCase family.

The protein localises to the cytoplasm. It carries out the reaction carbamoyl phosphate + L-ornithine = L-citrulline + phosphate + H(+). The protein operates within amino-acid biosynthesis; L-arginine biosynthesis; L-arginine from L-ornithine and carbamoyl phosphate: step 1/3. Its function is as follows. Reversibly catalyzes the transfer of the carbamoyl group from carbamoyl phosphate (CP) to the N(epsilon) atom of ornithine (ORN) to produce L-citrulline. In Hydrogenovibrio crunogenus (strain DSM 25203 / XCL-2) (Thiomicrospira crunogena), this protein is Ornithine carbamoyltransferase.